Consider the following 144-residue polypeptide: Large ribosomal subunit protein uL15 (144 aa).

The disordered stretch occupies residues 1–53 (MRLNTLSPAEGAKHSAKRLGRGIGSGLGKTGGRGHKGQKSRTGGGVRRGFEGG). A compositionally biased stretch (gly residues) spans 21 to 31 (RGIGSGLGKTG).

This sequence belongs to the universal ribosomal protein uL15 family. In terms of assembly, part of the 50S ribosomal subunit.

Its function is as follows. Binds to the 23S rRNA. The protein is Large ribosomal subunit protein uL15 of Pasteurella multocida (strain Pm70).